The sequence spans 145 residues: Cuticle protein 5 (145 aa).

The protein is Cuticle protein 5 of Blaberus craniifer (Death's head cockroach).